The chain runs to 341 residues: MGVATTLQPPTTSKTLQKQHLEAVGAYQYVLTFLFMGPFFSLLVFVLLFTSLWPFSVFYLVWLYVDWDTPNQGGRRSEWIRNRAIWRQLRDYYPVKLVKTAELPPDRNYVLGAHPHGIMCTGFLCNFSTESNGFSQLFPGLRPWLAVLAGLFYLPVYRDYIMSFGLCPVSRQSLDFILSQPQLGQAVVIMVGGAHEALYSVPGEHCLTLQKRKGFVRLALRHGASLVPVYSFGENDIFRLKAFATGSWQHWCQLTFKKLMGFSPCIFWGRGLFSATSWGLLPFAVPITTVVGRPIPVPQRLHPTEEEVNHYHALYMTALEQLFEEHKESCGVPASTCLTFI.

2 helical membrane-spanning segments follow: residues 29 to 49 (YVLTFLFMGPFFSLLVFVLLF) and 50 to 70 (TSLWPFSVFYLVWLYVDWDTP). N-linked (GlcNAc...) asparagine glycosylation is present at N126. A helical membrane pass occupies residues 137 to 157 (LFPGLRPWLAVLAGLFYLPVY).

It belongs to the diacylglycerol acyltransferase family. Post-translationally, ubiquitinated. Ubiquitination leads to proteasomal degradation. In terms of tissue distribution, selectively expressed in the digestive system. Highly expressed in the ileum, and at lower level in jejunum, duodenum, colon, cecum and the rectum. Not expressed in the stomach and the esophagus and trachea. Expressed at very low level in liver.

Its subcellular location is the endoplasmic reticulum membrane. It localises to the cytoplasm. The protein resides in the perinuclear region. The catalysed reaction is a 2-acylglycerol + an acyl-CoA = a 1,2-diacylglycerol + CoA. It catalyses the reaction an acyl-CoA + a 1,2-diacyl-sn-glycerol = a triacyl-sn-glycerol + CoA. The enzyme catalyses 2-(9Z-octadecenoyl)-glycerol + (9Z)-octadecenoyl-CoA = 1,2-di-(9Z-octadecenoyl)-sn-glycerol + CoA. It carries out the reaction 2-(9Z-octadecenoyl)-glycerol + hexadecanoyl-CoA = 1-hexadecanoyl-2-(9Z-octadecenoyl)-sn-glycerol + CoA. The catalysed reaction is 1,2-di-(9Z-octadecenoyl)-sn-glycerol + (9Z)-octadecenoyl-CoA = 1,2,3-tri-(9Z-octadecenoyl)-glycerol + CoA. It catalyses the reaction 1-hexadecanoyl-2-(9Z-octadecenoyl)-sn-glycerol + hexadecanoyl-CoA = 1,3-dihexadecanoyl-2-(9Z-octadecenoyl)glycerol + CoA. The enzyme catalyses all-trans-retinol + hexadecanoyl-CoA = all-trans-retinyl hexadecanoate + CoA. It carries out the reaction 1-O-(9Z-octadecenyl)-glycerol + (9Z)-octadecenoyl-CoA = 1-O-(9Z-octadecyl)-3-(9Z-octadecenoyl)-glycerol + CoA. The catalysed reaction is 1-O-(9Z-octadecyl)-3-(9Z-octadecenoyl)-glycerol + (9Z)-octadecenoyl-CoA = 1-O-(9Z-octadecenyl)-2,3-di-(9Z-octadecenoyl)glycerol + CoA. The protein operates within glycerolipid metabolism; triacylglycerol biosynthesis. Functionally, catalyzes the formation of diacylglycerol from 2-monoacylglycerol and fatty acyl-CoA. Also able to catalyze the terminal step in triacylglycerol synthesis by using diacylglycerol and fatty acyl-CoA as substrates. Has a preference toward palmitoyl-CoA and oleoyl-CoA. May be involved in absorption of dietary fat in the small intestine by catalyzing the resynthesis of triacylglycerol in enterocytes. Also able to use 1-monoalkylglycerol (1-MAkG) as an acyl acceptor for the synthesis of monoalkyl-monoacylglycerol (MAMAG). This Homo sapiens (Human) protein is 2-acylglycerol O-acyltransferase 3.